Consider the following 330-residue polypeptide: Fructose-1,6-bisphosphatase class 1 (330 aa).

4 residues coordinate Mg(2+): Glu-84, Asp-103, Leu-105, and Asp-106. Residues 106–109 (DGSS), Asn-196, and Lys-262 contribute to the substrate site. Mg(2+) is bound at residue Glu-268.

This sequence belongs to the FBPase class 1 family. As to quaternary structure, homotetramer. Requires Mg(2+) as cofactor.

The protein localises to the cytoplasm. It catalyses the reaction beta-D-fructose 1,6-bisphosphate + H2O = beta-D-fructose 6-phosphate + phosphate. It participates in carbohydrate biosynthesis; gluconeogenesis. The polypeptide is Fructose-1,6-bisphosphatase class 1 (Shewanella sp. (strain W3-18-1)).